Here is a 316-residue protein sequence, read N- to C-terminus: L-lactate dehydrogenase (316 aa).

NAD(+) is bound by residues Val15, Asp37, Lys42, Tyr68, and 82–83 (GL). Residues Gln85, Arg91, and 123 to 126 (NPVD) contribute to the substrate site. Residues 121–123 (ASN) and Thr146 contribute to the NAD(+) site. 151 to 154 (DTSR) is a substrate binding site. Positions 156 and 171 each coordinate beta-D-fructose 1,6-bisphosphate. His178 functions as the Proton acceptor in the catalytic mechanism. Tyr222 bears the Phosphotyrosine mark. Thr231 contributes to the substrate binding site.

Belongs to the LDH/MDH superfamily. LDH family. As to quaternary structure, homotetramer.

Its subcellular location is the cytoplasm. It catalyses the reaction (S)-lactate + NAD(+) = pyruvate + NADH + H(+). It participates in fermentation; pyruvate fermentation to lactate; (S)-lactate from pyruvate: step 1/1. Allosterically activated by fructose 1,6-bisphosphate (FBP). Functionally, catalyzes the conversion of lactate to pyruvate. The protein is L-lactate dehydrogenase of Borrelia turicatae (strain 91E135).